We begin with the raw amino-acid sequence, 469 residues long: Adenosylhomocysteinase (469 aa).

Substrate is bound by residues threonine 58, aspartate 133, and glutamate 195. 196–198 (TTT) contributes to the NAD(+) binding site. Residues lysine 225 and aspartate 229 each coordinate substrate. NAD(+) contacts are provided by residues asparagine 230, 259-264 (GFGDVG), glutamate 282, asparagine 317, 338-340 (IGH), and asparagine 383.

The protein belongs to the adenosylhomocysteinase family. It depends on NAD(+) as a cofactor.

It localises to the cytoplasm. The enzyme catalyses S-adenosyl-L-homocysteine + H2O = L-homocysteine + adenosine. It participates in amino-acid biosynthesis; L-homocysteine biosynthesis; L-homocysteine from S-adenosyl-L-homocysteine: step 1/1. In terms of biological role, may play a key role in the regulation of the intracellular concentration of adenosylhomocysteine. This is Adenosylhomocysteinase from Rhodopseudomonas palustris (strain ATCC BAA-98 / CGA009).